Reading from the N-terminus, the 381-residue chain is uncharacterized protein (381 aa).

A helical transmembrane segment spans residues 3–23 (GAVAGLVFLAVLVIFAIIVVA).

Belongs to the band 7/mec-2 family.

It is found in the membrane. This is an uncharacterized protein from Mycobacterium bovis (strain ATCC BAA-935 / AF2122/97).